We begin with the raw amino-acid sequence, 48 residues long: Protein PsbN (48 aa).

A helical transmembrane segment spans residues 12–34 (LLIAMVTITFGLTGYGLYTAFGP).

Belongs to the PsbN family.

It is found in the cellular thylakoid membrane. Its function is as follows. May play a role in photosystem I and II biogenesis. In Prochlorococcus marinus (strain MIT 9313), this protein is Protein PsbN.